A 1066-amino-acid chain; its full sequence is Isoleucine--tRNA ligase (1066 aa).

Positions 47-57 (PYTTGYIHLGT) match the 'HIGH' region motif. Residues 594 to 598 (KMSKS) carry the 'KMSKS' region motif. Residue K597 participates in ATP binding.

The protein belongs to the class-I aminoacyl-tRNA synthetase family. IleS type 2 subfamily. In terms of assembly, monomer. The cofactor is Zn(2+).

Its subcellular location is the cytoplasm. The enzyme catalyses tRNA(Ile) + L-isoleucine + ATP = L-isoleucyl-tRNA(Ile) + AMP + diphosphate. Its function is as follows. Catalyzes the attachment of isoleucine to tRNA(Ile). As IleRS can inadvertently accommodate and process structurally similar amino acids such as valine, to avoid such errors it has two additional distinct tRNA(Ile)-dependent editing activities. One activity is designated as 'pretransfer' editing and involves the hydrolysis of activated Val-AMP. The other activity is designated 'posttransfer' editing and involves deacylation of mischarged Val-tRNA(Ile). The protein is Isoleucine--tRNA ligase of Methanocorpusculum labreanum (strain ATCC 43576 / DSM 4855 / Z).